Reading from the N-terminus, the 575-residue chain is Cytochrome P450 monooxygenase opaB (575 aa).

Asn6 is a glycosylation site (N-linked (GlcNAc...) asparagine). The helical transmembrane segment at 37–57 threads the bilayer; that stretch reads FILAAILASIILLIIRNSMLS. N-linked (GlcNAc...) asparagine glycosylation is found at Asn83 and Asn242. Cys521 contributes to the heme binding site.

Belongs to the cytochrome P450 family. Heme is required as a cofactor.

The protein resides in the membrane. It functions in the pathway secondary metabolite biosynthesis. Cytochrome P450 monooxygenase; part of the gene cluster that mediates the biosynthesis of oxepinamides, derivatives of anthranilyl-containing tripeptides that share an oxepin ring and a fused pyrimidinone moiety. The nonribosomal peptide synthetase (NRPS) opaA assembles the quinazolinone core with D-Phe incorporation. The first adenylation domain (A1) of opaA loads and activates anthranilic acid whereas the second A domain (A2) is for activating of L-Phe, which is then converted to D-form by the E domain. The third A domain (A3) is responsible for L-Ile activation and the terminal condensation domain C3 for cyclization and releasing the NRPS product protuboxepin K. The cytochrome P450 monooxygenase opaB then catalyzes alone the oxepin ring formation to convert protuboxepin K into protuboxepin A. The flavoenzyme opaC installs subsequently one hydroxyl group at the oxepin ring, accompanied by double bond migration, to form 15-epi-oxepinamide E. The epimerase opaE changes the D-Phe residue back to L-form, leading to oxepinamide E, which is further methylated at the hydroxyl group at C-12 by the O-methyltransferase OpaF to yield oxepinamide F. This chain is Cytochrome P450 monooxygenase opaB, found in Aspergillus ustus.